The chain runs to 127 residues: Large ribosomal subunit protein bL21 (127 aa).

It belongs to the bacterial ribosomal protein bL21 family. In terms of assembly, part of the 50S ribosomal subunit. Contacts protein L20.

Its function is as follows. This protein binds to 23S rRNA in the presence of protein L20. The chain is Large ribosomal subunit protein bL21 from Synechococcus sp. (strain ATCC 27144 / PCC 6301 / SAUG 1402/1) (Anacystis nidulans).